A 432-amino-acid polypeptide reads, in one-letter code: Protein ABHD8 (432 aa).

2 disordered regions span residues 47–69 (KHAGPAPAPTPPPPLSDAAQGDQ) and 121–149 (PAGSDGRSVPGSAGSGSGGRRRRARRPKR). Over residues 52–61 (APAPTPPPPL) the composition is skewed to pro residues. Basic residues predominate over residues 139-149 (GRRRRARRPKR). The region spanning 170-272 (VLFFIHGVGG…HKVIMINGGG (103 aa)) is the AB hydrolase-1 domain. Residues Ser245, Asp363, and His391 each act as charge relay system in the active site.

This sequence belongs to the AB hydrolase superfamily. Interacts with NLRP3 (via NACHT and LLR domains); this interaction is enhanced in the presence of NLRP3 inflammasome inducers, such as ATP, nigericin, silica, or alum. Interacts with ZDHHC12.

Its subcellular location is the cytoplasm. Its function is as follows. Negatively regulates NLRP3-driven inflammation. Promotes NLRP3 degradation through the chaperone-mediated autophagy (CMA) pathway, hence attenuating inflammasome activation and IL1B secretion. Acts by recruiting palmitoyltransferase ZDHHC12 to NLRP3, facilitating NLRP3 palmitoylation and subsequent degradation. This is Protein ABHD8 from Bos taurus (Bovine).